We begin with the raw amino-acid sequence, 475 residues long: Protein nucleotidyltransferase YdiU (475 aa).

ATP contacts are provided by G82, G84, R85, K105, D117, G118, R168, and R175. D240 serves as the catalytic Proton acceptor. Mg(2+) is bound by residues N241 and D250. D250 provides a ligand contact to ATP.

The protein belongs to the SELO family. Mg(2+) is required as a cofactor. It depends on Mn(2+) as a cofactor.

It carries out the reaction L-seryl-[protein] + ATP = 3-O-(5'-adenylyl)-L-seryl-[protein] + diphosphate. The catalysed reaction is L-threonyl-[protein] + ATP = 3-O-(5'-adenylyl)-L-threonyl-[protein] + diphosphate. The enzyme catalyses L-tyrosyl-[protein] + ATP = O-(5'-adenylyl)-L-tyrosyl-[protein] + diphosphate. It catalyses the reaction L-histidyl-[protein] + UTP = N(tele)-(5'-uridylyl)-L-histidyl-[protein] + diphosphate. It carries out the reaction L-seryl-[protein] + UTP = O-(5'-uridylyl)-L-seryl-[protein] + diphosphate. The catalysed reaction is L-tyrosyl-[protein] + UTP = O-(5'-uridylyl)-L-tyrosyl-[protein] + diphosphate. Its function is as follows. Nucleotidyltransferase involved in the post-translational modification of proteins. It can catalyze the addition of adenosine monophosphate (AMP) or uridine monophosphate (UMP) to a protein, resulting in modifications known as AMPylation and UMPylation. This Aeromonas salmonicida (strain A449) protein is Protein nucleotidyltransferase YdiU.